The sequence spans 210 residues: MSLPAGVQRRSFGDEDGVLATRGEPAYGEPVVDGWRRWDAHRSKLGATFELGLDTGLSGGDAVLYLGAANGTTVSHVADFAGPTYAVEFAPRPVTDLLAVADSRERLFPLLKDARAPETYAHVVESGVDAIVQDVATRGQADVALSNRQFLADDGRLVAALKARSEDVTADPAAVFEDLLGRLRDGYEVRATARMEPFHEDHLAVVATPR.

S-adenosyl-L-methionine is bound by residues 72 to 73, 88 to 89, 113 to 114, and 134 to 137; these read TT, EF, DA, and DVAT.

The protein belongs to the methyltransferase superfamily. Fibrillarin family. In terms of assembly, interacts with nop5. Component of box C/D small ribonucleoprotein (sRNP) particles that contain rpl7ae, FlpA and nop5, plus a guide RNA.

In terms of biological role, involved in pre-rRNA and tRNA processing. Utilizes the methyl donor S-adenosyl-L-methionine to catalyze the site-specific 2'-hydroxyl methylation of ribose moieties in rRNA and tRNA. Site specificity is provided by a guide RNA that base pairs with the substrate. Methylation occurs at a characteristic distance from the sequence involved in base pairing with the guide RNA. The protein is Fibrillarin-like rRNA/tRNA 2'-O-methyltransferase of Halobacterium salinarum (strain ATCC 29341 / DSM 671 / R1).